A 472-amino-acid chain; its full sequence is Eukaryotic translation initiation factor 2 subunit 3B (472 aa).

Ala-2 carries the post-translational modification N-acetylalanine. Ser-16 is subject to Phosphoserine. Residues 39 to 248 (QATINIGTIG…IVKKIPVPPR (210 aa)) form the tr-type G domain. The interval 48–55 (GHVAHGKS) is G1. 51 to 56 (AHGKST) contributes to the GTP binding site. Positions 76–80 (NITIK) are G2. Positions 134-137 (DCPG) are G3. GTP is bound by residues 190-193 (NKID) and 225-227 (SAQ). The interval 190–193 (NKID) is G4. Positions 225–227 (SAQ) are G5.

Belongs to the TRAFAC class translation factor GTPase superfamily. Classic translation factor GTPase family. EIF2G subfamily. EIF2 is a heterotrimer composed of an alpha, a beta and a gamma chain. eIF2 is member of the 43S pre-initiation complex (43S PIC). As to expression, specifically expressed in testis at the mRNA level.

It catalyses the reaction GTP + H2O = GDP + phosphate + H(+). In terms of biological role, member of the eIF2 complex that functions in the early steps of protein synthesis by forming a ternary complex with GTP and initiator tRNA. This complex binds to a 40S ribosomal subunit, followed by mRNA binding to form the 43S pre-initiation complex (43S PIC). Junction of the 60S ribosomal subunit to form the 80S initiation complex is preceded by hydrolysis of the GTP bound to eIF2 and release of an eIF2-GDP binary complex. In order for eIF2 to recycle and catalyze another round of initiation, the GDP bound to eIF2 must exchange with GTP by way of a reaction catalyzed by eIF-2B. This Homo sapiens (Human) protein is Eukaryotic translation initiation factor 2 subunit 3B.